We begin with the raw amino-acid sequence, 106 residues long: Large ribosomal subunit protein uL24 (106 aa).

It belongs to the universal ribosomal protein uL24 family. Part of the 50S ribosomal subunit.

Its function is as follows. One of two assembly initiator proteins, it binds directly to the 5'-end of the 23S rRNA, where it nucleates assembly of the 50S subunit. One of the proteins that surrounds the polypeptide exit tunnel on the outside of the subunit. The protein is Large ribosomal subunit protein uL24 of Acidithiobacillus ferrooxidans (strain ATCC 53993 / BNL-5-31) (Leptospirillum ferrooxidans (ATCC 53993)).